The sequence spans 469 residues: Ribulose bisphosphate carboxylase large chain (469 aa).

K5 is subject to N6,N6,N6-trimethyllysine. Substrate contacts are provided by N114 and T164. K166 (proton acceptor) is an active-site residue. K168 provides a ligand contact to substrate. Mg(2+)-binding residues include K192, D194, and E195. K192 is modified (N6-carboxylysine). H285 serves as the catalytic Proton acceptor. Substrate contacts are provided by R286, H318, and S370.

It belongs to the RuBisCO large chain family. Type I subfamily. Heterohexadecamer of 8 large chains and 8 small chains; disulfide-linked. The disulfide link is formed within the large subunit homodimers. Requires Mg(2+) as cofactor. The disulfide bond which can form in the large chain dimeric partners within the hexadecamer appears to be associated with oxidative stress and protein turnover.

It localises to the plastid. Its subcellular location is the chloroplast. It catalyses the reaction 2 (2R)-3-phosphoglycerate + 2 H(+) = D-ribulose 1,5-bisphosphate + CO2 + H2O. It carries out the reaction D-ribulose 1,5-bisphosphate + O2 = 2-phosphoglycolate + (2R)-3-phosphoglycerate + 2 H(+). Its function is as follows. RuBisCO catalyzes two reactions: the carboxylation of D-ribulose 1,5-bisphosphate, the primary event in carbon dioxide fixation, as well as the oxidative fragmentation of the pentose substrate in the photorespiration process. Both reactions occur simultaneously and in competition at the same active site. The polypeptide is Ribulose bisphosphate carboxylase large chain (Nicandra physalodes (Apple-of-Peru)).